The chain runs to 495 residues: Ectonucleoside triphosphate diphosphohydrolase 2 (495 aa).

The Cytoplasmic portion of the chain corresponds to 1–4 (MAGK). A helical membrane pass occupies residues 5–25 (LVSLVPPLLLAAAGLTGLLLL). Residues 26-462 (CVPTQDVREP…PGLRKGTHFS (437 aa)) lie on the Extracellular side of the membrane. N-linked (GlcNAc...) asparagine glycosylation occurs at Asn-64. Cys-75 and Cys-99 are oxidised to a cystine. A glycan (N-linked (GlcNAc...) asparagine) is linked at Asn-129. Glu-165 (proton acceptor) is an active-site residue. Residue 204-208 (GASTQ) participates in ATP binding. 2 disulfides stabilise this stretch: Cys-242–Cys-284 and Cys-265–Cys-310. 3 N-linked (GlcNAc...) asparagine glycosylation sites follow: Asn-294, Asn-306, and Asn-319. 2 cysteine pairs are disulfide-bonded: Cys-323-Cys-328 and Cys-377-Cys-399. Asn-378 and Asn-443 each carry an N-linked (GlcNAc...) asparagine glycan. The helical transmembrane segment at 463-483 (SWVALLLLFTVLILAALVLLL) threads the bilayer. The Cytoplasmic portion of the chain corresponds to 484 to 495 (RQVRSAKSPGAL).

The protein belongs to the GDA1/CD39 NTPase family. The cofactor is Ca(2+). Mg(2+) is required as a cofactor. As to expression, expressed in brain, heart, vas deferens, kidney, skeletal muscle, thymus, lung and spleen. Weak expression in liver.

It localises to the cell membrane. Its function is as follows. In the nervous system, could hydrolyze ATP and other nucleotides to regulate purinergic neurotransmission. Hydrolyzes ADP only to a marginal extent. The protein is Ectonucleoside triphosphate diphosphohydrolase 2 (Entpd2) of Rattus norvegicus (Rat).